A 437-amino-acid polypeptide reads, in one-letter code: Eukaryotic peptide chain release factor subunit 1 (437 aa).

An NIKS motif; plays an important role in translational termination motif is present at residues 61-64; it reads NIKS.

It belongs to the eukaryotic release factor 1 family. As to quaternary structure, component of the eRF1-eRF3-GTP ternary complex, composed of ETF1/ERF1 and eRF3 (GSPT1/ERF3A or GSPT2/ERF3B) and GTP.

It is found in the cytoplasm. In terms of biological role, component of the eRF1-eRF3-GTP ternary complex, a ternary complex that mediates translation termination in response to the termination codons. The eRF1-eRF3-GTP complex binds to a stop codon in the ribosomal A-site. ETF1/ERF1 is responsible for stop codon recognition and inducing hydrolysis of peptidyl-tRNA. Following GTP hydrolysis, eRF3 (GSPT1/ERF3A or GSPT2/ERF3B) dissociates, permitting ETF1/eRF1 to accommodate fully in the A-site, followed by hydrolysis of peptidyl-tRNA. This Xenopus laevis (African clawed frog) protein is Eukaryotic peptide chain release factor subunit 1 (etf1).